Here is a 997-residue protein sequence, read N- to C-terminus: Pro-apoptotic serine protease NMA111 (997 aa).

Positions 1–43 (MTISLSNIKKRDHSKISDGTSGESSLVKRKQLESATGDQEEEY) are disordered. The interval 83–273 (VVSIHFSQVA…LPLDRILRAL (191 aa)) is serine protease. Active-site charge relay system residues include histidine 121, aspartate 152, and serine 235. 2 PDZ domains span residues 300 to 378 (RRLG…QRGG) and 779 to 854 (EEWI…VRDG).

It belongs to the peptidase S1C family. As to quaternary structure, interacts with BIR1.

The protein localises to the nucleus. In terms of biological role, nuclear serine protease which mediates apoptosis through proteolysis of the apoptotic inhibitor BIR1. This Saccharomyces cerevisiae (strain YJM789) (Baker's yeast) protein is Pro-apoptotic serine protease NMA111 (NMA111).